Reading from the N-terminus, the 293-residue chain is Phosphatidylserine decarboxylase proenzyme (293 aa).

Residues Asp88, His144, and Ser247 each act as charge relay system; for autoendoproteolytic cleavage activity in the active site. Ser247 functions as the Schiff-base intermediate with substrate; via pyruvic acid; for decarboxylase activity in the catalytic mechanism. Pyruvic acid (Ser); by autocatalysis is present on Ser247.

It belongs to the phosphatidylserine decarboxylase family. PSD-B subfamily. Prokaryotic type I sub-subfamily. In terms of assembly, heterodimer of a large membrane-associated beta subunit and a small pyruvoyl-containing alpha subunit. It depends on pyruvate as a cofactor. Post-translationally, is synthesized initially as an inactive proenzyme. Formation of the active enzyme involves a self-maturation process in which the active site pyruvoyl group is generated from an internal serine residue via an autocatalytic post-translational modification. Two non-identical subunits are generated from the proenzyme in this reaction, and the pyruvate is formed at the N-terminus of the alpha chain, which is derived from the carboxyl end of the proenzyme. The autoendoproteolytic cleavage occurs by a canonical serine protease mechanism, in which the side chain hydroxyl group of the serine supplies its oxygen atom to form the C-terminus of the beta chain, while the remainder of the serine residue undergoes an oxidative deamination to produce ammonia and the pyruvoyl prosthetic group on the alpha chain. During this reaction, the Ser that is part of the protease active site of the proenzyme becomes the pyruvoyl prosthetic group, which constitutes an essential element of the active site of the mature decarboxylase.

The protein resides in the cell membrane. It catalyses the reaction a 1,2-diacyl-sn-glycero-3-phospho-L-serine + H(+) = a 1,2-diacyl-sn-glycero-3-phosphoethanolamine + CO2. It functions in the pathway phospholipid metabolism; phosphatidylethanolamine biosynthesis; phosphatidylethanolamine from CDP-diacylglycerol: step 2/2. Its function is as follows. Catalyzes the formation of phosphatidylethanolamine (PtdEtn) from phosphatidylserine (PtdSer). In Xylella fastidiosa (strain 9a5c), this protein is Phosphatidylserine decarboxylase proenzyme.